Reading from the N-terminus, the 73-residue chain is Large ribosomal subunit protein bL31c (73 aa).

Belongs to the bacterial ribosomal protein bL31 family. Type A subfamily. Part of the 50S ribosomal subunit.

The protein resides in the plastid. The protein localises to the chloroplast. Functionally, binds the 23S rRNA. The sequence is that of Large ribosomal subunit protein bL31c from Palmaria palmata (Dulse).